The chain runs to 221 residues: PKHD-type hydroxylase A9601_13531 (221 aa).

Residues 80–174 (LIHGIMFTKS…RIVCVGWIES (95 aa)) form the Fe2OG dioxygenase domain. Residues histidine 98, aspartate 100, and histidine 155 each coordinate Fe cation. Arginine 165 contributes to the 2-oxoglutarate binding site.

It depends on Fe(2+) as a cofactor. Requires L-ascorbate as cofactor.

This chain is PKHD-type hydroxylase A9601_13531, found in Prochlorococcus marinus (strain AS9601).